The following is a 671-amino-acid chain: DNA ligase (671 aa).

NAD(+) contacts are provided by residues 32-36 (DAEYD), 81-82 (SL), and Glu113. Lys115 (N6-AMP-lysine intermediate) is an active-site residue. NAD(+)-binding residues include Arg136, Glu173, Lys290, and Lys314. Zn(2+)-binding residues include Cys408, Cys411, Cys426, and Cys432. The 79-residue stretch at 593 to 671 (EIDSPFAGKT…EAEMMRLLGE (79 aa)) folds into the BRCT domain.

This sequence belongs to the NAD-dependent DNA ligase family. LigA subfamily. Mg(2+) serves as cofactor. Mn(2+) is required as a cofactor.

It catalyses the reaction NAD(+) + (deoxyribonucleotide)n-3'-hydroxyl + 5'-phospho-(deoxyribonucleotide)m = (deoxyribonucleotide)n+m + AMP + beta-nicotinamide D-nucleotide.. Its function is as follows. DNA ligase that catalyzes the formation of phosphodiester linkages between 5'-phosphoryl and 3'-hydroxyl groups in double-stranded DNA using NAD as a coenzyme and as the energy source for the reaction. It is essential for DNA replication and repair of damaged DNA. This chain is DNA ligase, found in Klebsiella pneumoniae (strain 342).